Reading from the N-terminus, the 126-residue chain is Holo-[acyl-carrier-protein] synthase (126 aa).

Residues Asp-8 and Glu-60 each contribute to the Mg(2+) site.

It belongs to the P-Pant transferase superfamily. AcpS family. Mg(2+) serves as cofactor.

It localises to the cytoplasm. The catalysed reaction is apo-[ACP] + CoA = holo-[ACP] + adenosine 3',5'-bisphosphate + H(+). Transfers the 4'-phosphopantetheine moiety from coenzyme A to a Ser of acyl-carrier-protein. This chain is Holo-[acyl-carrier-protein] synthase, found in Ehrlichia canis (strain Jake).